Here is a 184-residue protein sequence, read N- to C-terminus: Ribose 1,5-bisphosphate phosphokinase PhnN (184 aa).

11 to 18 (GPSGAGKD) contacts ATP.

It belongs to the ribose 1,5-bisphosphokinase family.

It carries out the reaction alpha-D-ribose 1,5-bisphosphate + ATP = 5-phospho-alpha-D-ribose 1-diphosphate + ADP. It functions in the pathway metabolic intermediate biosynthesis; 5-phospho-alpha-D-ribose 1-diphosphate biosynthesis; 5-phospho-alpha-D-ribose 1-diphosphate from D-ribose 5-phosphate (route II): step 3/3. Its function is as follows. Catalyzes the phosphorylation of ribose 1,5-bisphosphate to 5-phospho-D-ribosyl alpha-1-diphosphate (PRPP). This chain is Ribose 1,5-bisphosphate phosphokinase PhnN, found in Burkholderia pseudomallei (strain K96243).